The chain runs to 355 residues: Peptide chain release factor 1 (355 aa).

Position 231 is an N5-methylglutamine (Gln-231). The span at 280–293 (KERKAKEQSERKDQ) shows a compositional bias: basic and acidic residues. Residues 280–307 (KERKAKEQSERKDQVGTGDRSGRIRTYN) form a disordered region.

It belongs to the prokaryotic/mitochondrial release factor family. Post-translationally, methylated by PrmC. Methylation increases the termination efficiency of RF1.

The protein resides in the cytoplasm. In terms of biological role, peptide chain release factor 1 directs the termination of translation in response to the peptide chain termination codons UAG and UAA. The chain is Peptide chain release factor 1 from Campylobacter hominis (strain ATCC BAA-381 / DSM 21671 / CCUG 45161 / LMG 19568 / NCTC 13146 / CH001A).